An 83-amino-acid chain; its full sequence is ATP synthase subunit c (83 aa).

2 helical membrane-spanning segments follow: residues 9–29 and 51–71; these read LICV…GIGI and MVFM…GLVI.

It belongs to the ATPase C chain family. In terms of assembly, F-type ATPases have 2 components, F(1) - the catalytic core - and F(0) - the membrane proton channel. F(1) has five subunits: alpha(3), beta(3), gamma(1), delta(1), epsilon(1). F(0) has three main subunits: a(1), b(2) and c(10-14). The alpha and beta chains form an alternating ring which encloses part of the gamma chain. F(1) is attached to F(0) by a central stalk formed by the gamma and epsilon chains, while a peripheral stalk is formed by the delta and b chains.

It is found in the cell inner membrane. F(1)F(0) ATP synthase produces ATP from ADP in the presence of a proton or sodium gradient. F-type ATPases consist of two structural domains, F(1) containing the extramembraneous catalytic core and F(0) containing the membrane proton channel, linked together by a central stalk and a peripheral stalk. During catalysis, ATP synthesis in the catalytic domain of F(1) is coupled via a rotary mechanism of the central stalk subunits to proton translocation. Functionally, key component of the F(0) channel; it plays a direct role in translocation across the membrane. A homomeric c-ring of between 10-14 subunits forms the central stalk rotor element with the F(1) delta and epsilon subunits. The protein is ATP synthase subunit c of Desulfotalea psychrophila (strain LSv54 / DSM 12343).